Reading from the N-terminus, the 318-residue chain is Gamma-glutamyl hydrolase (318 aa).

A signal peptide spans 1–24; sequence MASPGCLLCVLGLLLCGAASLELS. The region spanning 25-318 is the Gamma-glutamyl hydrolase domain; sequence RPHGDTAKKP…SSFQQCYIFD (294 aa). A glycan (N-linked (GlcNAc...) asparagine) is linked at asparagine 116. Cysteine 134 functions as the Nucleophile in the catalytic mechanism. Asparagine 163 and asparagine 203 each carry an N-linked (GlcNAc...) asparagine glycan. Catalysis depends on histidine 244, which acts as the Proton donor. Asparagine 307 is a glycosylation site (N-linked (GlcNAc...) asparagine; partial).

Belongs to the peptidase C26 family. In terms of assembly, homodimer.

Its subcellular location is the secreted. The protein resides in the extracellular space. It localises to the lysosome. It is found in the melanosome. The catalysed reaction is (6S)-5,6,7,8-tetrahydrofolyl-(gamma-L-Glu)(n) + (n-1) H2O = (6S)-5,6,7,8-tetrahydrofolate + (n-1) L-glutamate. Hydrolyzes the polyglutamate sidechains of pteroylpolyglutamates. Progressively removes gamma-glutamyl residues from pteroylpoly-gamma-glutamate to yield pteroyl-alpha-glutamate (folic acid) and free glutamate. May play an important role in the bioavailability of dietary pteroylpolyglutamates and in the metabolism of pteroylpolyglutamates and antifolates. This Homo sapiens (Human) protein is Gamma-glutamyl hydrolase.